Consider the following 261-residue polypeptide: MIYKCPMCREFFSERADLFMHQKIHTAEKPHKCDKCDKGFFHISELHIHWRDHTGEKVYKCDDCVKDFSTTTKLNRHKKIHTVEKPYKCYECGKAFNWSSHLQIHMRVHTGEKPYVCSECGRGFSNSSNLCMHQRVHTGEKPFKCEECGKAFRHTSSLCMHQRVHTGEKPYKCYECGKAFSQSSSLCIHQRVHTGEKPYRCCGCGKAFSQSSSLCIHQRVHTGEKPFKCDECGKAFSQSTSLCIHQRVHTKERNHLKISVI.

9 consecutive C2H2-type zinc fingers follow at residues 3–25 (YKCP…QKIH), 31–53 (HKCD…WRDH), 59–81 (YKCD…KKIH), 87–109 (YKCY…MRVH), 115–137 (YVCS…QRVH), 143–165 (FKCE…QRVH), 171–193 (YKCY…QRVH), 199–221 (YRCC…QRVH), and 227–249 (FKCD…QRVH). Residue Lys257 forms a Glycyl lysine isopeptide (Lys-Gly) (interchain with G-Cter in SUMO2) linkage.

This sequence belongs to the krueppel C2H2-type zinc-finger protein family.

The protein localises to the nucleus. In terms of biological role, may be involved in transcriptional regulation. This chain is Zinc finger protein 664 (Znf664), found in Mus musculus (Mouse).